Here is a 614-residue protein sequence, read N- to C-terminus: Zinc finger protein 276 (614 aa).

The disordered stretch occupies residues 1 to 50 (MKRDRLGRFLSPGSSRQCGASDGGGGVSRTRGRPSLSGGPRVDGATARRA). The ZAD domain maps to 77-163 (GHCRLCHGKF…LQRVNASPAG (87 aa)). Positions 79, 82, 136, and 139 each coordinate Zn(2+). The disordered stretch occupies residues 268 to 420 (APRLPQHRGW…KKPGPKPGWK (153 aa)). Residues 357–369 (SDLSEGDVLSEDE) are compositionally biased toward acidic residues. A compositionally biased stretch (basic and acidic residues) spans 386 to 408 (YPERKVSGKKSESKEAKKSEEPR). Residues 409–420 (IRKKPGPKPGWK) show a composition bias toward basic residues. C2H2-type zinc fingers lie at residues 434–458 (YKCPYQGCTAVYRGADGMKKHIKEH), 465–490 (RPCPHPGCNKVFMIDRYLQRHVKLIH), 496–518 (YICDECGQTFKQRKHLLVHQMRH), 524–546 (LQCEVCGFQCRQRASLKYHMTKH), and 554–577 (FACDQCGRRFEKAHNLNVHMSMVH). The tract at residues 583 to 614 (QDKALPLEAEPPPGPPSPSVTTEGQAVKPEPT) is disordered. Over residues 591 to 600 (AEPPPGPPSP) the composition is skewed to pro residues.

The protein resides in the nucleus. The protein localises to the chromosome. Its subcellular location is the centromere. It is found in the kinetochore. Functionally, may be involved in transcriptional regulation. This chain is Zinc finger protein 276 (ZNF276), found in Homo sapiens (Human).